The sequence spans 167 residues: Lipoprotein signal peptidase (167 aa).

3 consecutive transmembrane segments (helical) span residues 10-30 (LIWL…KAWV), 68-88 (WQMW…TFWL), and 98-118 (SALP…DRFL). Residues Asp-124 and Asp-142 contribute to the active site. The helical transmembrane segment at 138–158 (FNLADSAIVAGAIGIGLLSLF) threads the bilayer.

Belongs to the peptidase A8 family.

The protein resides in the cell inner membrane. It carries out the reaction Release of signal peptides from bacterial membrane prolipoproteins. Hydrolyzes -Xaa-Yaa-Zaa-|-(S,diacylglyceryl)Cys-, in which Xaa is hydrophobic (preferably Leu), and Yaa (Ala or Ser) and Zaa (Gly or Ala) have small, neutral side chains.. It participates in protein modification; lipoprotein biosynthesis (signal peptide cleavage). This protein specifically catalyzes the removal of signal peptides from prolipoproteins. This is Lipoprotein signal peptidase from Xylella fastidiosa (strain 9a5c).